A 149-amino-acid chain; its full sequence is Transcriptional repressor NrdR (149 aa).

The segment at 3–34 is a zinc-finger region; the sequence is CPYCSYEESKVVDSRSAEDYNAIRRRRECLRC. In terms of domain architecture, ATP-cone spans 49–139; it reads ILVIKKDLSR…VYRQFKDINT (91 aa).

Belongs to the NrdR family. Requires Zn(2+) as cofactor.

Functionally, negatively regulates transcription of bacterial ribonucleotide reductase nrd genes and operons by binding to NrdR-boxes. The chain is Transcriptional repressor NrdR from Clostridium perfringens (strain SM101 / Type A).